A 206-amino-acid chain; its full sequence is LexA repressor (206 aa).

Residues 28–48 constitute a DNA-binding region (H-T-H motif); the sequence is RAEIARRLGFKSANAAEEHLK. Catalysis depends on for autocatalytic cleavage activity residues Ser-123 and Lys-160.

This sequence belongs to the peptidase S24 family. Homodimer.

It catalyses the reaction Hydrolysis of Ala-|-Gly bond in repressor LexA.. Functionally, represses a number of genes involved in the response to DNA damage (SOS response), including recA and lexA. In the presence of single-stranded DNA, RecA interacts with LexA causing an autocatalytic cleavage which disrupts the DNA-binding part of LexA, leading to derepression of the SOS regulon and eventually DNA repair. The sequence is that of LexA repressor from Shewanella pealeana (strain ATCC 700345 / ANG-SQ1).